The primary structure comprises 448 residues: MTTILKHLPVGQRIGIAFSGGLDTSAALLWMRQKGAVPYAYTANLGQPDEEDYDAIPRRAMEYGAENARLIDCRKQLVAEGIAAIQCGAFHNTTGGLTYFNTTPLGRAVTGTMLVAAMKDDGVNIWGDGSTYKGNDIERFYRYGLLTNAELQIYKPWLDTDFIDELGGRQEMSEFMVASGFDYKMSAEKAYSTDSNMLGATHEAKDLEFLNSSVKIVNPIMGVKFWDENVKVQVEEVTVRFERGHPVALNGQTFSDDVELMLEANRIGGRHGLGMSDQIENRIIEAKSRGIYEAPGMALLHIAYERLLTGIHNEDTIEQYHSHGRQLGKLLYQGRWFDPQALMLRDALQRWVASAITGEVTLELRRGNDYSILNTVSDNLTYKAERLTMEKGDSVFSPDDRIGQLTMRNLDITDTREKLFNYIETGLLSASSGNGLPQVENLEHSDKK.

ATP-binding positions include A17 to S25 and A43. Y99 is an L-citrulline binding site. ATP is bound by residues G129 and T131. L-aspartate contacts are provided by T131, N135, and D136. N135 serves as a coordination point for L-citrulline. Position 136 (D136) interacts with ATP. Residues R139 and S192 each coordinate L-citrulline. D194 is an ATP binding site. Positions 201, 203, and 280 each coordinate L-citrulline.

This sequence belongs to the argininosuccinate synthase family. Type 2 subfamily. In terms of assembly, homotetramer.

Its subcellular location is the cytoplasm. The catalysed reaction is L-citrulline + L-aspartate + ATP = 2-(N(omega)-L-arginino)succinate + AMP + diphosphate + H(+). Its pathway is amino-acid biosynthesis; L-arginine biosynthesis; L-arginine from L-ornithine and carbamoyl phosphate: step 2/3. This Enterobacter sp. (strain 638) protein is Argininosuccinate synthase.